The sequence spans 1093 residues: TATA element modulatory factor (1093 aa).

2 disordered regions span residues 38 to 80 (WAET…SPKA) and 108 to 189 (TIQK…DMKV). The segment covering 51–70 (SPVSGGWDTSTWGLKSNTEP) has biased composition (polar residues). A phosphoserine mark is found at serine 72, serine 77, serine 112, and serine 136. Residues 123–137 (QRPEEEVKSSLHESL) are compositionally biased toward basic and acidic residues. The segment covering 139-158 (IGQSRTPETTESQVKDSSLC) has biased composition (polar residues). The span at 173–187 (TEGKHEETVNKESDM) shows a compositional bias: basic and acidic residues. Serine 199 and serine 217 each carry phosphoserine. Positions 229–238 (PKEQKHEDRQ) are enriched in basic and acidic residues. Disordered regions lie at residues 229-260 (PKEQ…SDIE) and 266-285 (SVIS…SKSS). Over residues 246–257 (VSTFSSGTSTTS) the composition is skewed to low complexity. Phosphoserine occurs at positions 328, 330, 333, 338, 344, 413, 542, 925, and 928. An interaction with Elongin BC complex region spans residues 333–342 (SLDSRSVSEI). Residues 439–922 (EALSEKEDVC…QETIKEKERK (484 aa)) adopt a coiled-coil conformation. The segment at 919-939 (KERKPFSVSSTPTMSRSSSIS) is disordered. The segment covering 925–939 (SVSSTPTMSRSSSIS) has biased composition (low complexity). Threonine 929 is modified (phosphothreonine). A Phosphoserine modification is found at serine 933. The stretch at 984 to 1092 (SIIENLQSQL…QIDELLRQSL (109 aa)) forms a coiled coil.

Interacts with TRNP1; may regulate TRNP1 proteasomal degradation. Component of the SNF/SWI transcription factor complexes. Interacts with RAB6A. Interacts with STAT3 and FER. Interacts with TCEB1. Post-translationally, phosphorylated by FER.

The protein localises to the cytoplasm. It localises to the nucleus. It is found in the golgi apparatus membrane. In terms of biological role, potential coactivator of the androgen receptor. Mediates STAT3 degradation. May play critical roles in two RAB6-dependent retrograde transport processes: one from endosomes to the Golgi and the other from the Golgi to the ER. This protein binds the HIV-1 TATA element and inhibits transcriptional activation by the TATA-binding protein (TBP). In Homo sapiens (Human), this protein is TATA element modulatory factor (TMF1).